The primary structure comprises 253 residues: Phosphoribosylaminoimidazole-succinocarboxamide synthase (253 aa).

The protein belongs to the SAICAR synthetase family.

The enzyme catalyses 5-amino-1-(5-phospho-D-ribosyl)imidazole-4-carboxylate + L-aspartate + ATP = (2S)-2-[5-amino-1-(5-phospho-beta-D-ribosyl)imidazole-4-carboxamido]succinate + ADP + phosphate + 2 H(+). It functions in the pathway purine metabolism; IMP biosynthesis via de novo pathway; 5-amino-1-(5-phospho-D-ribosyl)imidazole-4-carboxamide from 5-amino-1-(5-phospho-D-ribosyl)imidazole-4-carboxylate: step 1/2. The sequence is that of Phosphoribosylaminoimidazole-succinocarboxamide synthase from Parvibaculum lavamentivorans (strain DS-1 / DSM 13023 / NCIMB 13966).